The chain runs to 426 residues: Adenylosuccinate synthetase (426 aa).

GTP is bound by residues 11 to 17 and 39 to 41; these read GDEGKGK and GHT. The active-site Proton acceptor is the Asp-12. Mg(2+)-binding residues include Asp-12 and Gly-39. IMP contacts are provided by residues 12-15, 37-40, Thr-130, Arg-144, Asn-226, Thr-241, and Arg-305; these read DEGK and NAGH. The Proton donor role is filled by His-40. 301-307 provides a ligand contact to substrate; sequence VTTGRKR. GTP-binding positions include Arg-307, 333 to 335, and 415 to 417; these read KLD and GTG.

It belongs to the adenylosuccinate synthetase family. As to quaternary structure, homodimer. Requires Mg(2+) as cofactor.

It is found in the cytoplasm. The catalysed reaction is IMP + L-aspartate + GTP = N(6)-(1,2-dicarboxyethyl)-AMP + GDP + phosphate + 2 H(+). It functions in the pathway purine metabolism; AMP biosynthesis via de novo pathway; AMP from IMP: step 1/2. Its function is as follows. Plays an important role in the de novo pathway and in the salvage pathway of purine nucleotide biosynthesis. Catalyzes the first committed step in the biosynthesis of AMP from IMP. The chain is Adenylosuccinate synthetase from Meyerozyma guilliermondii (strain ATCC 6260 / CBS 566 / DSM 6381 / JCM 1539 / NBRC 10279 / NRRL Y-324) (Yeast).